A 189-amino-acid polypeptide reads, in one-letter code: UPF0301 protein PLES_04031 (189 aa).

It belongs to the UPF0301 (AlgH) family.

The sequence is that of UPF0301 protein PLES_04031 from Pseudomonas aeruginosa (strain LESB58).